A 1205-amino-acid polypeptide reads, in one-letter code: Plasma membrane calcium-transporting ATPase 4 (1205 aa).

Topologically, residues 1 to 100 (MTNPPGQSVS…KTFLELVWEA (100 aa)) are cytoplasmic. The helical transmembrane segment at 101–121 (LQDVTLIILEIAAIISLVLSF) threads the bilayer. Topologically, residues 122 to 147 (YRPPGGDNEICGHIASSPEEEEEGET) are extracellular. The helical transmembrane segment at 148–168 (GWIEGAAILASVIIVVLVTAF) threads the bilayer. The Cytoplasmic segment spans residues 169–369 (NDWSKEKQFR…LAVQIGKAGL (201 aa)). The segment at 294-318 (DDDDKKKKGKKQGAPENRNKAKTQD) is disordered. Serine 329 and serine 335 each carry phosphoserine. The chain crosses the membrane as a helical span at residues 370–390 (IMSVLTVVILILYFVVDNFVI). At 391–409 (QRREWLPECTPVYIQYFVK) the chain is on the extracellular side. Residues 410–430 (FFIIGVTVLVVAVPEGLPLAV) form a helical membrane-spanning segment. Residues 431–844 (TISLAYSVKK…RNVYDSISKF (414 aa)) are Cytoplasmic-facing. The 4-aspartylphosphate intermediate role is filled by aspartate 466. 2 residues coordinate Mg(2+): aspartate 786 and aspartate 790. Residues 845 to 865 (LQFQLTVNVVAVIVAFTGACI) form a helical membrane-spanning segment. Residues 866–872 (TQDSPLK) lie on the Extracellular side of the membrane. The chain crosses the membrane as a helical span at residues 873–893 (AVQMLWVNLIMDTFASLALAT). At 894–919 (EPPTESLLRRRPYGRNKPLISRTMMK) the chain is on the cytoplasmic side. A helical membrane pass occupies residues 920 to 942 (NILGHAVYQLLIVFLLVFAGDTL). Topologically, residues 943–956 (FDIDSGRKAPLNSP) are extracellular. A helical transmembrane segment spans residues 957-979 (PSQHYTIVFNTFVLMQLFNEINA). Over 980–995 (RKIHGEKNVFAGVYRN) the chain is Cytoplasmic. A helical transmembrane segment spans residues 996 to 1016 (IIFCTVVLGTFFCQIMIVELG). Residues 1017–1029 (GKPFSCTSLTMEQ) lie on the Extracellular side of the membrane. The chain crosses the membrane as a helical span at residues 1030 to 1050 (WMWCLFIGIGELLWGQVISAI). Topologically, residues 1051 to 1205 (PTKSLKFLKE…SPLPSLETPV (155 aa)) are cytoplasmic. Serine 1065 and serine 1071 each carry phosphoserine. Residue arginine 1072 is modified to Omega-N-methylarginine. The segment at 1087–1104 (LRRGQILWVRGLNRIQTQ) is calmodulin-binding subdomain A. Threonine 1103 carries the phosphothreonine; by PKC modification. The interval 1105–1114 (IRVVKLFHNN) is calmodulin-binding subdomain B. Phosphoserine is present on serine 1145.

The protein belongs to the cation transport ATPase (P-type) (TC 3.A.3) family. Type IIB subfamily. As to quaternary structure, interacts with PDZD11. Interacts with SLC35G1 and STIM1. Interacts with calmodulin. As to expression, specifically expressed by sperm in testis (at protein level).

The protein resides in the membrane. It localises to the cell projection. The protein localises to the cilium. Its subcellular location is the flagellum membrane. It catalyses the reaction Ca(2+)(in) + ATP + H2O = Ca(2+)(out) + ADP + phosphate + H(+). Activated by calcium/calmodulin. Its function is as follows. Calcium/calmodulin-regulated and magnesium-dependent enzyme that catalyzes the hydrolysis of ATP coupled with the transport of calcium out of the cell. By regulating sperm cell calcium homeostasis, may play a role in sperm motility. This chain is Plasma membrane calcium-transporting ATPase 4, found in Mus musculus (Mouse).